Consider the following 121-residue polypeptide: Fluoride-specific ion channel FluC 2 (121 aa).

Transmembrane regions (helical) follow at residues Y3 to I23, I31 to A51, G64 to V84, and F92 to L112. Na(+) contacts are provided by G71 and T74.

Belongs to the fluoride channel Fluc/FEX (TC 1.A.43) family.

Its subcellular location is the cell membrane. The catalysed reaction is fluoride(in) = fluoride(out). Na(+) is not transported, but it plays an essential structural role and its presence is essential for fluoride channel function. Functionally, fluoride-specific ion channel. Important for reducing fluoride concentration in the cell, thus reducing its toxicity. This is Fluoride-specific ion channel FluC 2 from Staphylococcus saprophyticus subsp. saprophyticus (strain ATCC 15305 / DSM 20229 / NCIMB 8711 / NCTC 7292 / S-41).